A 720-amino-acid chain; its full sequence is ATP-dependent RNA helicase glh-3 (720 aa).

Polar residues predominate over residues 1–11 (MDKSPTKTSIR). 2 disordered regions span residues 1–34 (MDKSPTKTSIRTKFARHQPISDVDTTEQSSSCIK) and 125–180 (LNSR…SYGN). Basic and acidic residues-rich tracts occupy residues 141-154 (NVKENEGSIHRSDD) and 162-172 (SAKDEERDRDS). 2 consecutive CCHC-type zinc fingers follow at residues 202–219 (NTCFNCKKYGHRATECSA) and 222–239 (RECANCGDPNHRANECAS). Positions 298-326 (KSFSDSDIPQSMRRNVERAGYTRTTPIQQ) match the Q motif motif. One can recognise a Helicase ATP-binding domain in the interval 329 to 513 (LPLVADGKDI…RKLLREDYTM (185 aa)). An ATP-binding site is contributed by 342 to 349 (AQTGSGKT). A DEAD box motif is present at residues 456-459 (DEAD). The 150-residue stretch at 549 to 698 (DIDTYTTEKN…VVPSWMKEAA (150 aa)) folds into the Helicase C-terminal domain. A disordered region spans residues 696–720 (EAAGGTSNPNKFEKSIDTEEPEEAW).

This sequence belongs to the DEAD box helicase family. DDX4/VASA subfamily. Interacts with csn-5. Interacts (via C-terminus) with kgb-1. Interacts with zyx-1.

Its subcellular location is the cytoplasm. It carries out the reaction ATP + H2O = ADP + phosphate + H(+). Its function is as follows. Probable ATP-binding RNA helicase. The sequence is that of ATP-dependent RNA helicase glh-3 from Caenorhabditis elegans.